The primary structure comprises 355 residues: N-acetyl-gamma-glutamyl-phosphate reductase (355 aa).

Residue Cys152 is part of the active site.

It belongs to the NAGSA dehydrogenase family. Type 1 subfamily.

It is found in the cytoplasm. The enzyme catalyses N-acetyl-L-glutamate 5-semialdehyde + phosphate + NADP(+) = N-acetyl-L-glutamyl 5-phosphate + NADPH + H(+). It functions in the pathway amino-acid biosynthesis; L-arginine biosynthesis; N(2)-acetyl-L-ornithine from L-glutamate: step 3/4. Catalyzes the NADPH-dependent reduction of N-acetyl-5-glutamyl phosphate to yield N-acetyl-L-glutamate 5-semialdehyde. The sequence is that of N-acetyl-gamma-glutamyl-phosphate reductase from Psychrobacter cryohalolentis (strain ATCC BAA-1226 / DSM 17306 / VKM B-2378 / K5).